The following is a 168-amino-acid chain: I-Kappa-B like protein G2 (168 aa).

ANK repeat units follow at residues 56–88 (SQRQCVHIVVCEDKVNAIKKLKVLLEMGADING) and 93–123 (GGNTPLHLAVHSNNYKLVKWLCKQPSINKTA).

This sequence belongs to the polydnaviridae I-Kappa-B-like protein family.

Its function is as follows. Suppresses the host immune response through NF-kappa-B inactivation. Possesses ankyrin repeat domains required for NF-kappa-B binding but lacks the regulatory regions required for dissociation from NF-kappa-B and degradation. Therefore, prevents host NF-kappa-B release and subsequent activation. The sequence is that of I-Kappa-B like protein G2 (G4) from Microplitis demolitor (Parasitoid wasp).